Reading from the N-terminus, the 199-residue chain is Recombination protein RecR (199 aa).

The segment at 58 to 73 (CQTCHHLSAEPTCEIC) adopts a C4-type zinc-finger fold. A Toprim domain is found at 81 to 175 (GQICVVADSR…RVSRIAYGLP (95 aa)).

This sequence belongs to the RecR family.

Its function is as follows. May play a role in DNA repair. It seems to be involved in an RecBC-independent recombinational process of DNA repair. It may act with RecF and RecO. The sequence is that of Recombination protein RecR from Synechococcus sp. (strain WH7803).